A 411-amino-acid polypeptide reads, in one-letter code: MSISFDLTIDDTRDQLARHARASLEAKPSLIGMSREEMAEALIKAGVPERQVKMRISQLWHWLYVRGVSDFADMRNISKDLRAMLAQHFTIARPEVVEEQISQDGTRKWLFRFPPRGAGRPVEIESVYIPEEGRGTLCVSSQVGCTLTCSFCHTGTQKLVRNLTSEEILAQLLTARDRLGDFPDKDTPDGAMVPAEGRKITNIVMMGMGEPLYNFEEVKKALLIASDGDGLSLSKRRITLSTSGVVPEIYRTGDEIGVMLAISLHAVRDELRDILVPINKKYPLEQLIKACREYPGLSNAKRITFEYVMLKDINDSLEDAKLLVKLLQGIPAKINLIPFNPWPGTNYQCSEWEQIEKFADYVNAAGYASPIRTPRGRDILAACGQLKSESERMRKSERLALEAMMIAGHGE.

The Proton acceptor role is filled by Glu125. In terms of domain architecture, Radical SAM core spans 131-380 (EEGRGTLCVS…IRTPRGRDIL (250 aa)). Cys138 and Cys383 are joined by a disulfide. Residues Cys145, Cys149, and Cys152 each contribute to the [4Fe-4S] cluster site. Residues 209–210 (GE), Ser241, 263–265 (SLH), and Asn340 contribute to the S-adenosyl-L-methionine site. The active-site S-methylcysteine intermediate is Cys383.

Belongs to the radical SAM superfamily. RlmN family. [4Fe-4S] cluster serves as cofactor.

Its subcellular location is the cytoplasm. The enzyme catalyses adenosine(2503) in 23S rRNA + 2 reduced [2Fe-2S]-[ferredoxin] + 2 S-adenosyl-L-methionine = 2-methyladenosine(2503) in 23S rRNA + 5'-deoxyadenosine + L-methionine + 2 oxidized [2Fe-2S]-[ferredoxin] + S-adenosyl-L-homocysteine. It carries out the reaction adenosine(37) in tRNA + 2 reduced [2Fe-2S]-[ferredoxin] + 2 S-adenosyl-L-methionine = 2-methyladenosine(37) in tRNA + 5'-deoxyadenosine + L-methionine + 2 oxidized [2Fe-2S]-[ferredoxin] + S-adenosyl-L-homocysteine. Its function is as follows. Specifically methylates position 2 of adenine 2503 in 23S rRNA and position 2 of adenine 37 in tRNAs. m2A2503 modification seems to play a crucial role in the proofreading step occurring at the peptidyl transferase center and thus would serve to optimize ribosomal fidelity. The chain is Dual-specificity RNA methyltransferase RlmN from Brucella anthropi (strain ATCC 49188 / DSM 6882 / CCUG 24695 / JCM 21032 / LMG 3331 / NBRC 15819 / NCTC 12168 / Alc 37) (Ochrobactrum anthropi).